A 146-amino-acid polypeptide reads, in one-letter code: ATP synthase epsilon chain (146 aa).

Residues 92 to 116 (ISVDQARRDRDSLRKKLNEHERSEQ) are compositionally biased toward basic and acidic residues. The tract at residues 92–120 (ISVDQARRDRDSLRKKLNEHERSEQDPEV) is disordered.

It belongs to the ATPase epsilon chain family. In terms of assembly, F-type ATPases have 2 components, CF(1) - the catalytic core - and CF(0) - the membrane proton channel. CF(1) has five subunits: alpha(3), beta(3), gamma(1), delta(1), epsilon(1). CF(0) has three main subunits: a, b and c.

The protein resides in the cell membrane. Its function is as follows. Produces ATP from ADP in the presence of a proton gradient across the membrane. The protein is ATP synthase epsilon chain of Cutibacterium acnes (strain DSM 16379 / KPA171202) (Propionibacterium acnes).